Consider the following 528-residue polypeptide: Low affinity inorganic phosphate transporter 4 (528 aa).

The Cytoplasmic segment spans residues 1–18 (MALEVLEALDSARTQWYH). Residues 19-39 (VTAIVIAGMGFFTDAYDLFCI) form a helical membrane-spanning segment. The Extracellular portion of the chain corresponds to 40 to 68 (TTVSKLLGRLYYFDPSTGKPGKLPNNVNN). A helical membrane pass occupies residues 69-89 (LVTGVALVGTLSGQLFFGYLG). At 90-96 (DKLGRKK) the chain is on the cytoplasmic side. The helical transmembrane segment at 97–117 (VYGVTLILMVACAICSGLSFG) threads the bilayer. The Extracellular portion of the chain corresponds to 118 to 122 (ASAKS). The chain crosses the membrane as a helical span at residues 123-143 (VMGTLCFFRFWLGFGIGGDYP). At 144–158 (LSATIMSEYANKRTR) the chain is on the cytoplasmic side. A helical membrane pass occupies residues 159-179 (GAFIAAVFAMQGVGIIFAGLV). At 180–208 (SMCLSAGFKASYHAPSFHDDPIMSTQPQG) the chain is on the extracellular side. A helical membrane pass occupies residues 209–229 (DLMWRLVLMIGAVPAAMTYYW). Over 230 to 292 (RMKMPETGRY…NEFFTRHGRH (63 aa)) the chain is Cytoplasmic. The helical transmembrane segment at 293-313 (LIGTMTSWFLLDIAFYSQNLT) threads the bilayer. Residues 314 to 341 (QKDIFPAMGLIDKDFEMNAIQEVFETSR) are Extracellular-facing. A helical transmembrane segment spans residues 342–362 (AMFVIALFGTFPGYWFTVFFI). At 363–371 (EKLGRYKIQ) the chain is on the cytoplasmic side. Residues 372–392 (LIGFFMMSVFMFIIGVKYDYL) traverse the membrane as a helical segment. Over 393-401 (RNENSHMFA) the chain is Extracellular. A helical transmembrane segment spans residues 402-422 (LLYGLTFFFANFGPNSTTFVL). At 423–433 (PAELFPTRVRS) the chain is on the cytoplasmic side. A helical membrane pass occupies residues 434–454 (TCHALSAAAGKAGAMVGAFGI). Over 455–467 (QNYTQKGEQKQIK) the chain is Extracellular. A glycan (N-linked (GlcNAc...) asparagine) is linked at Asn-456. The chain crosses the membrane as a helical span at residues 468-488 (HAMMILAVTNLIGFFCSFLVT). The Cytoplasmic segment spans residues 489–528 (ETKGRSLEEISGEDGRESELTPTPPNNRVPTRQEPRSETM). Basic and acidic residues-rich tracts occupy residues 496–507 (EEISGEDGRESE) and 519–528 (TRQEPRSETM). Residues 496-528 (EEISGEDGRESELTPTPPNNRVPTRQEPRSETM) form a disordered region.

Belongs to the major facilitator superfamily. Phosphate:H(+) symporter (TC 2.A.1.9) family. As to expression, expressed only in mycorrhizal roots, exclusively in cortical cells containing arbuscules, upon arbuscular mycorrhizal (AM) symbiosis with AM fungi (e.g. Gigaspora margarita and Funnelliformis mosseae). Also observed in root tips of non-mycorrhizal roots, in a phosphate (Pi) depended-manner, highest expression levels being observed in low Pi conditions.

It localises to the cell membrane. It carries out the reaction phosphate(in) + H(+)(in) = phosphate(out) + H(+)(out). Functionally, low-affinity transporter for external inorganic phosphate (Pi) probably involved in the acquisition of phosphate released by arbuscular mycorrhizal (AM) fungi (e.g. Gigaspora margarita and Funnelliformis mosseae) during AM symbiosis; required for propper mycorrhizal arbuscule morphology. Acts as a Pi-sensing machinery at the root tip level, independently of AM fungi, involved in the regulation of early root branching and lateral roots formation. The protein is Low affinity inorganic phosphate transporter 4 of Lotus japonicus (Lotus corniculatus var. japonicus).